The primary structure comprises 296 residues: GTPase Era (296 aa).

Positions 3–170 (KSGFVTIIGR…IELMVKHLNE (168 aa)) constitute an Era-type G domain. The interval 11-18 (GRPNVGKS) is G1. Residue 11–18 (GRPNVGKS) coordinates GTP. The segment at 37–41 (QTTRN) is G2. Residues 58–61 (DTPG) form a G3 region. GTP-binding positions include 58 to 62 (DTPGM) and 120 to 123 (NKID). Residues 120–123 (NKID) form a G4 region. The interval 149 to 151 (ISA) is G5. The region spanning 201–277 (LSQEVPHGIA…NMKIWVKVKK (77 aa)) is the KH type-2 domain.

This sequence belongs to the TRAFAC class TrmE-Era-EngA-EngB-Septin-like GTPase superfamily. Era GTPase family. Monomer.

The protein resides in the cytoplasm. It localises to the cell membrane. An essential GTPase that binds both GDP and GTP, with rapid nucleotide exchange. Plays a role in 16S rRNA processing and 30S ribosomal subunit biogenesis and possibly also in cell cycle regulation and energy metabolism. This chain is GTPase Era, found in Clostridium acetobutylicum (strain ATCC 824 / DSM 792 / JCM 1419 / IAM 19013 / LMG 5710 / NBRC 13948 / NRRL B-527 / VKM B-1787 / 2291 / W).